The sequence spans 460 residues: Jacalin-related lectin 36 (460 aa).

The Jacalin-type lectin 1 domain maps to 1–131 (MAAATMSWDD…LNSIDVHFAP (131 aa)). The residue at position 2 (Ala-2) is an N-acetylalanine. Disordered stretches follow at residues 34–57 (YDGDTHNPHHHGTPGKKSDGVSLS), 133–162 (PSSSSSSSSLSQANKVDAQGGKGGTSWDDG), and 291–334 (SGRG…PHEG). The span at 133-143 (PSSSSSSSSLS) shows a compositional bias: low complexity. The Jacalin-type lectin 2 domain maps to 145–289 (ANKVDAQGGK…LNALGAYFAP (145 aa)). A compositionally biased stretch (polar residues) spans 292–309 (GRGTPSATQPPGSAQPTG). The 145-residue stretch at 313–457 (AKKLEAKGGN…IHQVGVHVKP (145 aa)) folds into the Jacalin-type lectin 3 domain.

It belongs to the jacalin lectin family.

This Arabidopsis thaliana (Mouse-ear cress) protein is Jacalin-related lectin 36 (JAL36).